The following is a 685-amino-acid chain: MAYQEKITEFKNWATNLGCPPTALPTDDALRRIFKSGSSLLLNQLQSRIQPVDYVREVRENLLIAQVARYKDKMVPLASRSFQPPELQRYQKIQELKKHKEKANQQLTEARKEYQKLSAGIKTKNIQTISAENRKQLLESKCNILDLKLESLNKNYDQELKNKIQILGTTPVKLSARNASEAQATRAVEQALKQLETFYGMCDDGNAVNNLAEAKQRLWDQMRSTFADIPNSLLLNVVMKIKEEQLQHIMKLNESRGECTNDKPPLNNYEVKLLKTKADMLGLAAKYFAAQKELELKEERFCQDYSVFVDKLQSKVYRFNGISLGDEENADELISDYLVQYNMRNFNRSQNEFLREQIEQLRLELDAGAKQLENHDLKLGSVKQVYGDINSSINRIQQDMVQLSQIKEKILFSRNMMKNLLDDMQAATQKQNAKSQLMSTKLKVSNMSMLGAESFCLANDSVFSSTKVEFDGNCSAINSTMRRSFDNKTLVPGGAASTTLMAASGATLPSHLLEFNTFLEIPLEKFSCTPRACSFLLSANPLIVEAQELASTVQLAPGYLLTPFGALQEVRKRILWASAIAAHTSELKLNLQPLIVDPHDLRLKASRQHEEIDQLLDNLMAIGVKTQLQLEKAERIYQFLLENPLRRYVPPSKRYNNGSFADYESEFNLYYRMTTNGSSMRAPPN.

Coiled coils occupy residues Leu-87–Gln-165 and Asn-342–Leu-379.

In terms of assembly, component of the augmin complex composed of dgt2, dgt3, dgt4, dgt5, dgt6, msd1, msd5 and wac. The complex interacts directly or indirectly with microtubules and is required for centrosome-independent generation of spindle microtubules.

The protein localises to the cytoplasm. It localises to the cytoskeleton. Its subcellular location is the spindle. It is found in the chromosome. The protein resides in the centromere. The protein localises to the kinetochore. It localises to the microtubule organizing center. Its subcellular location is the centrosome. Functionally, as part of the augmin complex, plays a role in centrosome-independent generation of spindle microtubules. The complex is required for mitotic spindle assembly through its involvement in localizing gamma-tubulin to spindle microtubules. This is Augmin complex subunit dgt5 from Drosophila melanogaster (Fruit fly).